A 229-amino-acid polypeptide reads, in one-letter code: ATP synthase subunit a (229 aa).

Transmembrane regions (helical) follow at residues 24–44 (RLCF…LLFC), 45–65 (LFDL…FMLF), 83–103 (LLFC…CFLC), 117–137 (FMDV…SLLC), 143–163 (FLRL…FFDF), 177–199 (CYFI…LYLL), and 206–228 (LQLF…FLLF).

This sequence belongs to the ATPase A chain family. In terms of assembly, F-type ATPases have 2 components, CF(1) - the catalytic core - and CF(0) - the membrane proton channel. CF(1) has five subunits: alpha(3), beta(3), gamma(1), delta(1), epsilon(1). CF(0) has three main subunits: a, b and c.

Its subcellular location is the mitochondrion inner membrane. Mitochondrial membrane ATP synthase (F(1)F(0) ATP synthase or Complex V) produces ATP from ADP in the presence of a proton gradient across the membrane which is generated by electron transport complexes of the respiratory chain. F-type ATPases consist of two structural domains, F(1) - containing the extramembraneous catalytic core and F(0) - containing the membrane proton channel, linked together by a central stalk and a peripheral stalk. During catalysis, ATP synthesis in the catalytic domain of F(1) is coupled via a rotary mechanism of the central stalk subunits to proton translocation. Key component of the proton channel; it may play a direct role in the translocation of protons across the membrane. This chain is ATP synthase subunit a (ATP6), found in Trypanosoma brucei brucei.